A 122-amino-acid chain; its full sequence is Basic phospholipase A2 LmTX-II (122 aa).

Disulfide bonds link cysteine 26/cysteine 115, cysteine 28/cysteine 44, cysteine 43/cysteine 95, cysteine 49/cysteine 122, cysteine 50/cysteine 88, and cysteine 75/cysteine 86. Positions 27, 29, and 31 each coordinate Ca(2+). Histidine 47 is an active-site residue. Ca(2+) is bound at residue aspartate 48. The active site involves aspartate 89.

In terms of assembly, monomer. Requires Ca(2+) as cofactor. As to expression, expressed by the venom gland.

The protein resides in the secreted. The enzyme catalyses a 1,2-diacyl-sn-glycero-3-phosphocholine + H2O = a 1-acyl-sn-glycero-3-phosphocholine + a fatty acid + H(+). Its function is as follows. Snake venom phospholipase A2 (PLA2) that may display neurotoxic and myotoxic activities. May induce inflammatory edema by mechanisms involving mast cell activation and arachidonic acid metabolites. May increase plasma creatine kinase activity. PLA2 catalyzes the calcium-dependent hydrolysis of the 2-acyl groups in 3-sn-phosphoglycerides. This Lachesis muta muta (Bushmaster) protein is Basic phospholipase A2 LmTX-II.